A 212-amino-acid chain; its full sequence is Uridine kinase (212 aa).

Position 12 to 19 (12 to 19 (GGSGGGKT)) interacts with ATP.

It belongs to the uridine kinase family.

Its subcellular location is the cytoplasm. It carries out the reaction uridine + ATP = UMP + ADP + H(+). The enzyme catalyses cytidine + ATP = CMP + ADP + H(+). Its pathway is pyrimidine metabolism; CTP biosynthesis via salvage pathway; CTP from cytidine: step 1/3. It participates in pyrimidine metabolism; UMP biosynthesis via salvage pathway; UMP from uridine: step 1/1. The protein is Uridine kinase of Streptococcus pneumoniae serotype 2 (strain D39 / NCTC 7466).